The sequence spans 177 residues: Large ribosomal subunit protein uL6 (177 aa).

Residues 154–177 (PEPYKGKGVRYADEQVRRKEAKKK) form a disordered region. Residues 155–171 (EPYKGKGVRYADEQVRR) are compositionally biased toward basic and acidic residues.

Belongs to the universal ribosomal protein uL6 family. As to quaternary structure, part of the 50S ribosomal subunit.

Functionally, this protein binds to the 23S rRNA, and is important in its secondary structure. It is located near the subunit interface in the base of the L7/L12 stalk, and near the tRNA binding site of the peptidyltransferase center. This Alcanivorax borkumensis (strain ATCC 700651 / DSM 11573 / NCIMB 13689 / SK2) protein is Large ribosomal subunit protein uL6.